We begin with the raw amino-acid sequence, 120 residues long: Large ribosomal subunit protein bL21 (120 aa).

The protein belongs to the bacterial ribosomal protein bL21 family. Part of the 50S ribosomal subunit. Contacts protein L20.

Functionally, this protein binds to 23S rRNA in the presence of protein L20. This Roseiflexus castenholzii (strain DSM 13941 / HLO8) protein is Large ribosomal subunit protein bL21.